A 315-amino-acid polypeptide reads, in one-letter code: Protoheme IX farnesyltransferase (315 aa).

9 helical membrane-spanning segments follow: residues 38–58 (IIEL…QGVP), 62–82 (LVLL…ALNM), 111–131 (LVFG…TVNW), 132–152 (LSAW…TMIL), 159–179 (NIVW…SAVT), 184–204 (WAPV…YWPL), 233–253 (IVIY…LGYT), 255–275 (WFYT…AHGL), and 293–313 (LFHW…VDPF).

This sequence belongs to the UbiA prenyltransferase family. Protoheme IX farnesyltransferase subfamily.

It is found in the cell membrane. It carries out the reaction heme b + (2E,6E)-farnesyl diphosphate + H2O = Fe(II)-heme o + diphosphate. It functions in the pathway porphyrin-containing compound metabolism; heme O biosynthesis; heme O from protoheme: step 1/1. Functionally, converts heme B (protoheme IX) to heme O by substitution of the vinyl group on carbon 2 of heme B porphyrin ring with a hydroxyethyl farnesyl side group. This chain is Protoheme IX farnesyltransferase, found in Streptomyces coelicolor (strain ATCC BAA-471 / A3(2) / M145).